The primary structure comprises 123 residues: WAP four-disulfide core domain protein 5 (123 aa).

A signal peptide spans 1-24 (MRFGRLLLLAVLLAGVSQLPAVSG). 2 WAP domains span residues 27-74 (KGEK…IPRV) and 75-121 (SVKL…RDPV). Disulfide bonds link cysteine 34-cysteine 62, cysteine 41-cysteine 66, cysteine 49-cysteine 61, cysteine 55-cysteine 70, cysteine 81-cysteine 109, cysteine 88-cysteine 113, cysteine 96-cysteine 108, and cysteine 102-cysteine 117.

It localises to the secreted. In terms of biological role, putative acid-stable proteinase inhibitor. This Otolemur garnettii (Small-eared galago) protein is WAP four-disulfide core domain protein 5 (WFDC5).